Consider the following 543-residue polypeptide: Secreted effector protein SptP (543 aa).

The interval 35–139 (TDKAYVAPEK…FINLIKNKDN (105 aa)) is chaperone-binding. Residues 162–293 (DVGAESKQPL…TAELEKIKAG (132 aa)) form the Bacterial Rho-GAP domain. The 229-residue stretch at 315-543 (IPINQQTQVK…QAQLLMTTAS (229 aa)) folds into the Tyrosine-protein phosphatase domain. Catalysis depends on Cys481, which acts as the Phosphocysteine intermediate.

As to quaternary structure, forms a complex with SicP.

Its subcellular location is the secreted. The protein resides in the host cytoplasm. It catalyses the reaction O-phospho-L-tyrosyl-[protein] + H2O = L-tyrosyl-[protein] + phosphate. Effector proteins function to alter host cell physiology and promote bacterial survival in host tissues. This protein includes tyrosine phosphatase and GTPase activating protein (GAP) activities. After bacterial internalization, GAP mediates the reversal of the cytoskeletal changes induced by SopE. This function is independent of its tyrosine phosphatase activity, which remains unclear. This Salmonella typhi protein is Secreted effector protein SptP (sptP).